Consider the following 416-residue polypeptide: D-amino acid dehydrogenase (416 aa).

3–17 (ITILGSGVIGVTTAY) is an FAD binding site.

This sequence belongs to the DadA oxidoreductase family. FAD is required as a cofactor.

The enzyme catalyses a D-alpha-amino acid + A + H2O = a 2-oxocarboxylate + AH2 + NH4(+). It participates in amino-acid degradation; D-alanine degradation; NH(3) and pyruvate from D-alanine: step 1/1. Oxidative deamination of D-amino acids. The protein is D-amino acid dehydrogenase of Brucella canis (strain ATCC 23365 / NCTC 10854 / RM-666).